A 226-amino-acid polypeptide reads, in one-letter code: Octanoyltransferase (226 aa).

Residues L34–F212 form the BPL/LPL catalytic domain. Residues R76–H83, A143–G145, and G156–A158 contribute to the substrate site. C174 (acyl-thioester intermediate) is an active-site residue.

Belongs to the LipB family.

Its subcellular location is the cytoplasm. The enzyme catalyses octanoyl-[ACP] + L-lysyl-[protein] = N(6)-octanoyl-L-lysyl-[protein] + holo-[ACP] + H(+). It participates in protein modification; protein lipoylation via endogenous pathway; protein N(6)-(lipoyl)lysine from octanoyl-[acyl-carrier-protein]: step 1/2. In terms of biological role, catalyzes the transfer of endogenously produced octanoic acid from octanoyl-acyl-carrier-protein onto the lipoyl domains of lipoate-dependent enzymes. Lipoyl-ACP can also act as a substrate although octanoyl-ACP is likely to be the physiological substrate. The protein is Octanoyltransferase of Thermosynechococcus vestitus (strain NIES-2133 / IAM M-273 / BP-1).